A 309-amino-acid chain; its full sequence is Elongation factor Ts (309 aa).

Residues 82-85 (TDFV) are involved in Mg(2+) ion dislocation from EF-Tu.

The protein belongs to the EF-Ts family.

It is found in the cytoplasm. Functionally, associates with the EF-Tu.GDP complex and induces the exchange of GDP to GTP. It remains bound to the aminoacyl-tRNA.EF-Tu.GTP complex up to the GTP hydrolysis stage on the ribosome. The protein is Elongation factor Ts of Rickettsia bellii (strain OSU 85-389).